Reading from the N-terminus, the 161-residue chain is Allophycocyanin alpha chain 1 (161 aa).

N71 carries the post-translational modification N4-methylasparagine. C81 provides a ligand contact to (2R,3E)-phycocyanobilin.

Belongs to the phycobiliprotein family. Component of the phycobilisome. Heterodimer of an alpha and a beta chain. Contains one covalently linked bilin chromophore.

The protein localises to the cellular thylakoid membrane. In terms of biological role, light-harvesting photosynthetic bile pigment-protein from the phycobiliprotein complex. Allophycocyanin has a maximum absorption at approximately 650 nanometers. The polypeptide is Allophycocyanin alpha chain 1 (Microchaete diplosiphon (Fremyella diplosiphon)).